We begin with the raw amino-acid sequence, 231 residues long: Endo-1,4-beta-xylanase 4 (231 aa).

An N-terminal signal peptide occupies residues 1–18 (MVSFTTILVAATAALVAA). The region spanning 42-230 (GGTPSSTGTH…SSGSSTVTIQ (189 aa)) is the GH11 domain. A glycan (N-linked (GlcNAc...) asparagine) is linked at Asn99. Residue Glu126 is the Nucleophile of the active site. Glu217 serves as the catalytic Proton donor.

This sequence belongs to the glycosyl hydrolase 11 (cellulase G) family.

The protein resides in the secreted. The catalysed reaction is Endohydrolysis of (1-&gt;4)-beta-D-xylosidic linkages in xylans.. It functions in the pathway glycan degradation; xylan degradation. Functionally, endo-1,4-beta-xylanase involved in the hydrolysis of xylan, a major structural heterogeneous polysaccharide found in plant biomass representing the second most abundant polysaccharide in the biosphere, after cellulose. This is Endo-1,4-beta-xylanase 4 (XYL4) from Pyricularia grisea (Crabgrass-specific blast fungus).